Consider the following 67-residue polypeptide: ATP synthase F(0) complex subunit 8 (67 aa).

A helical transmembrane segment spans residues 8–24 (TWSITIMSMIMTLFIVF). Position 54 is an N6-acetyllysine; alternate (Lys54). An N6-succinyllysine; alternate modification is found at Lys54. At Lys57 the chain carries N6-acetyllysine.

Belongs to the ATPase protein 8 family. Component of the ATP synthase complex composed at least of ATP5F1A/subunit alpha, ATP5F1B/subunit beta, ATP5MC1/subunit c (homooctomer), MT-ATP6/subunit a, MT-ATP8/subunit 8, ATP5ME/subunit e, ATP5MF/subunit f, ATP5MG/subunit g, ATP5MK/subunit k, ATP5MJ/subunit j, ATP5F1C/subunit gamma, ATP5F1D/subunit delta, ATP5F1E/subunit epsilon, ATP5PF/subunit F6, ATP5PB/subunit b, ATP5PD/subunit d, ATP5PO/subunit OSCP. ATP synthase complex consists of a soluble F(1) head domain (subunits alpha(3) and beta(3)) - the catalytic core - and a membrane F(0) domain - the membrane proton channel (subunits c, a, 8, e, f, g, k and j). These two domains are linked by a central stalk (subunits gamma, delta, and epsilon) rotating inside the F1 region and a stationary peripheral stalk (subunits F6, b, d, and OSCP). Interacts with PRICKLE3.

Its subcellular location is the mitochondrion membrane. In terms of biological role, subunit 8, of the mitochondrial membrane ATP synthase complex (F(1)F(0) ATP synthase or Complex V) that produces ATP from ADP in the presence of a proton gradient across the membrane which is generated by electron transport complexes of the respiratory chain. ATP synthase complex consist of a soluble F(1) head domain - the catalytic core - and a membrane F(1) domain - the membrane proton channel. These two domains are linked by a central stalk rotating inside the F(1) region and a stationary peripheral stalk. During catalysis, ATP synthesis in the catalytic domain of F(1) is coupled via a rotary mechanism of the central stalk subunits to proton translocation. In vivo, can only synthesize ATP although its ATP hydrolase activity can be activated artificially in vitro. Part of the complex F(0) domain. The polypeptide is ATP synthase F(0) complex subunit 8 (Felis catus (Cat)).